Reading from the N-terminus, the 109-residue chain is Large ribosomal subunit protein uL22 (109 aa).

The protein belongs to the universal ribosomal protein uL22 family. In terms of assembly, part of the 50S ribosomal subunit.

Its function is as follows. This protein binds specifically to 23S rRNA; its binding is stimulated by other ribosomal proteins, e.g. L4, L17, and L20. It is important during the early stages of 50S assembly. It makes multiple contacts with different domains of the 23S rRNA in the assembled 50S subunit and ribosome. The globular domain of the protein is located near the polypeptide exit tunnel on the outside of the subunit, while an extended beta-hairpin is found that lines the wall of the exit tunnel in the center of the 70S ribosome. The chain is Large ribosomal subunit protein uL22 from Ralstonia nicotianae (strain ATCC BAA-1114 / GMI1000) (Ralstonia solanacearum).